We begin with the raw amino-acid sequence, 176 residues long: ATP-dependent protease subunit HslV (176 aa).

Threonine 2 is an active-site residue. Na(+) contacts are provided by glycine 157, cysteine 160, and threonine 163.

Belongs to the peptidase T1B family. HslV subfamily. In terms of assembly, a double ring-shaped homohexamer of HslV is capped on each side by a ring-shaped HslU homohexamer. The assembly of the HslU/HslV complex is dependent on binding of ATP.

Its subcellular location is the cytoplasm. It catalyses the reaction ATP-dependent cleavage of peptide bonds with broad specificity.. With respect to regulation, allosterically activated by HslU binding. In terms of biological role, protease subunit of a proteasome-like degradation complex believed to be a general protein degrading machinery. In Escherichia coli O45:K1 (strain S88 / ExPEC), this protein is ATP-dependent protease subunit HslV.